Reading from the N-terminus, the 652-residue chain is MSEKIYPIPDNIKKNALIDEETYQQWYQESINDPESFWAKHGQCIEWFKPYTKVKNTSFNGDVSIQWYEDGITNVAYNCIDRHLKTHGDKIALIWEGDNPYHDKKITYNELYEHVCRFANILKNHGVKKGDKVTIYLTMIPEAAYAMLACARIGAIHSVIFAGFSPEAIAGRIVDCESTFIITANQGLRGGKQINLKDSVDHAIEIAARQNVHVDQVMVIRRTCGPIHWVEGRDFWYHEEVSHTKTDCPAEKMNAEDPLFILYTSGSTGKPKGVLHTTAGYLVYASMTHKYVFDYHAGEIYWCTADIGWITGHSYLVYGPLCNAATTLMFEGTPTFPDNGRFWEIVDKHQVNIFYTAPTAIRALMGAGNSFVERSKRTSLRLLGSVGEPINPEAWEWFYHTVGNNHCPILDTWWQTETGGHMITPLPGATPLKAGSATRPFFGVQLQIIDAEGNVLEGETEGNLCIIDSWPGQMRTLYNDHERFIQTYFSTYKGKYFTGDGCRRDSDGYYWITGRVDDILNVSGHRLGTAEIESALVSHPAVSEAAVVGYPHTIKGQGIYSFITLMEGTAPSEELHQELIRHVRKEIGSIAILDKVQFAPQLPKTRSGKIMRRILRKIAENNFDNLGDISTLSEPQVIDDLIANRQNREITA.

Residues 189-192 (RGGK) and Thr-311 contribute to the CoA site. Residues 387 to 389 (GEP), 411 to 416 (DTWWQT), Asp-500, and Arg-515 contribute to the ATP site. Ser-523 serves as a coordination point for CoA. Residue Arg-526 coordinates ATP. The Mg(2+) site is built by Val-537, His-539, and Val-542. Arg-584 lines the CoA pocket. At Lys-609 the chain carries N6-acetyllysine.

This sequence belongs to the ATP-dependent AMP-binding enzyme family. Requires Mg(2+) as cofactor. In terms of processing, acetylated. Deacetylation by the SIR2-homolog deacetylase activates the enzyme.

The catalysed reaction is acetate + ATP + CoA = acetyl-CoA + AMP + diphosphate. In terms of biological role, catalyzes the conversion of acetate into acetyl-CoA (AcCoA), an essential intermediate at the junction of anabolic and catabolic pathways. AcsA undergoes a two-step reaction. In the first half reaction, AcsA combines acetate with ATP to form acetyl-adenylate (AcAMP) intermediate. In the second half reaction, it can then transfer the acetyl group from AcAMP to the sulfhydryl group of CoA, forming the product AcCoA. In Bartonella henselae (strain ATCC 49882 / DSM 28221 / CCUG 30454 / Houston 1) (Rochalimaea henselae), this protein is Acetyl-coenzyme A synthetase.